Consider the following 891-residue polypeptide: Alanine--tRNA ligase (891 aa).

Zn(2+)-binding residues include His-574, His-578, Cys-676, and His-680.

The protein belongs to the class-II aminoacyl-tRNA synthetase family. Zn(2+) serves as cofactor.

It is found in the cytoplasm. It catalyses the reaction tRNA(Ala) + L-alanine + ATP = L-alanyl-tRNA(Ala) + AMP + diphosphate. Catalyzes the attachment of alanine to tRNA(Ala) in a two-step reaction: alanine is first activated by ATP to form Ala-AMP and then transferred to the acceptor end of tRNA(Ala). Also edits incorrectly charged Ser-tRNA(Ala) and Gly-tRNA(Ala) via its editing domain. The polypeptide is Alanine--tRNA ligase (Synechococcus sp. (strain WH7803)).